A 155-amino-acid polypeptide reads, in one-letter code: Large ribosomal subunit protein uL30 (155 aa).

It belongs to the universal ribosomal protein uL30 family. In terms of assembly, part of the 50S ribosomal subunit.

The polypeptide is Large ribosomal subunit protein uL30 (Pyrococcus furiosus (strain ATCC 43587 / DSM 3638 / JCM 8422 / Vc1)).